A 984-amino-acid chain; its full sequence is E3 ubiquitin-protein ligase BRE1A (984 aa).

The tract at residues 1–34 (MSGAGNKRAAGEPGPSAPPEKKAGVEDSGTTVET) is disordered. Residues 43–90 (TEELDIRTLQTKNRKLAEMLDQRQAIEDELREHIEKLERRQATDDASL) adopt a coiled-coil conformation. The disordered stretch occupies residues 128–150 (VVPEPEPDSDSNQERKDERERGE). A compositionally biased stretch (basic and acidic residues) spans 139–150 (NQERKDERERGE). Coiled coils occupy residues 236–378 (ADTL…VKET) and 429–907 (SLHK…TTKK). Residues 506-632 (SDLSKIRSRS…KHEDGRKKEA (127 aa)) are disordered. Residues 514 to 526 (RSGSALLQSQSST) are compositionally biased toward polar residues. Basic and acidic residues-rich tracts occupy residues 527–540 (EDTK…KQEP) and 558–632 (SEVK…KKEA). The RING-type zinc finger occupies 931-970 (CPCCNMRKKDAVLTKCFHVFCFECVKTRYDTRQRKCPKCN).

This sequence belongs to the BRE1 family. In terms of assembly, component of the RNF20/40 complex (also known as BRE1 complex).

The protein resides in the nucleus. The catalysed reaction is S-ubiquitinyl-[E2 ubiquitin-conjugating enzyme]-L-cysteine + [acceptor protein]-L-lysine = [E2 ubiquitin-conjugating enzyme]-L-cysteine + N(6)-ubiquitinyl-[acceptor protein]-L-lysine.. Its pathway is protein modification; protein ubiquitination. In terms of biological role, component of the RNF20/40 E3 ubiquitin-protein ligase complex that mediates monoubiquitination of 'Lys-120' of histone H2B (H2BK120ub1). H2BK120ub1 gives a specific tag for epigenetic transcriptional activation and is also prerequisite for histone H3 'Lys-4' and 'Lys-79' methylation (H3K4me and H3K79me, respectively). The polypeptide is E3 ubiquitin-protein ligase BRE1A (RNF20) (Gallus gallus (Chicken)).